Consider the following 343-residue polypeptide: Cytoplasmic tRNA 2-thiolation protein 1 (343 aa).

This sequence belongs to the TtcA family. CTU1/NCS6/ATPBD3 subfamily.

The protein localises to the cytoplasm. It functions in the pathway tRNA modification; 5-methoxycarbonylmethyl-2-thiouridine-tRNA biosynthesis. In terms of biological role, plays a central role in 2-thiolation of mcm(5)S(2)U at tRNA wobble positions of tRNA(Lys), tRNA(Glu) and tRNA(Gln). Directly binds tRNAs and probably acts by catalyzing adenylation of tRNAs, an intermediate required for 2-thiolation. It is unclear whether it acts as a sulfurtransferase that transfers sulfur from thiocarboxylated URM1 onto the uridine of tRNAs at wobble position. The chain is Cytoplasmic tRNA 2-thiolation protein 1 from Drosophila ananassae (Fruit fly).